The following is a 185-amino-acid chain: Ribosome-recycling factor (185 aa).

This sequence belongs to the RRF family.

It localises to the cytoplasm. In terms of biological role, responsible for the release of ribosomes from messenger RNA at the termination of protein biosynthesis. May increase the efficiency of translation by recycling ribosomes from one round of translation to another. The sequence is that of Ribosome-recycling factor from Corynebacterium kroppenstedtii (strain DSM 44385 / JCM 11950 / CIP 105744 / CCUG 35717).